Reading from the N-terminus, the 91-residue chain is UPF0250 protein Pfl01_4965 (91 aa).

This sequence belongs to the UPF0250 family.

This Pseudomonas fluorescens (strain Pf0-1) protein is UPF0250 protein Pfl01_4965.